The sequence spans 56 residues: Ovomucoid (56 aa).

The 51-residue stretch at 6–56 (VDCSDHPKPACLQEQKPICGSDNKTYDNKCSFCNAVVDSNGTLTLSHFGKC) folds into the Kazal-like domain. Cystine bridges form between Cys-8–Cys-38, Cys-16–Cys-35, and Cys-24–Cys-56. Residue Asn-45 is glycosylated (N-linked (GlcNAc...) asparagine).

It is found in the secreted. The polypeptide is Ovomucoid (Ortalis vetula (Plain chachalaca)).